Reading from the N-terminus, the 112-residue chain is MIQATIRRSHDKGILSFEMTGHANFAEHGQDLVCAGVTAVVFGAVNAVIVLAGFEPLLDIGEDGGYFYFEFPESLDPEARQKAQLLIEGMIVSLETIERDYKDNLRVTTNII.

The Proton donor role is filled by H22. C34 (nucleophile) is an active-site residue.

The protein belongs to the Prp family. Homodimer.

An essential cysteine protease that cleaves the N-terminus from ribosomal protein bL27. In Bacillus subtilis (strain 168), this protein is Ribosomal processing cysteine protease Prp.